We begin with the raw amino-acid sequence, 462 residues long: Integrator complex subunit 12 (462 aa).

The tract at residues 42 to 132 (GIDSSYRPSQ…PETQSSPITV (91 aa)) is disordered. The span at 59–86 (ISSTKNISIKQEPKISSSLPSGNNNGKV) shows a compositional bias: polar residues. Residue lysine 68 forms a Glycyl lysine isopeptide (Lys-Gly) (interchain with G-Cter in SUMO2) linkage. The span at 88–124 (TTEKVKKEAEKRPADKMKSDITEGVDIPKKPRLEKPE) shows a compositional bias: basic and acidic residues. Serine 128 carries the phosphoserine modification. The PHD-type zinc-finger motif lies at 159 to 215 (GLACVVCRQMMVASGNQLVECQECHNLYHRDCHKPQVTDKEANDPRLVWYCARCTRQ). Residue lysine 254 forms a Glycyl lysine isopeptide (Lys-Gly) (interchain with G-Cter in SUMO2) linkage. Residues 301–328 (SSAGPSTAKLSSTTQNNTGKPATSSANQ) are compositionally biased toward polar residues. Residues 301-462 (SSAGPSTAKL…KKAAQKKLKK (162 aa)) are disordered. 2 stretches are compositionally biased toward low complexity: residues 347–358 (KIGSNNSTTPTV) and 382–437 (VSKV…GPTS). Basic residues predominate over residues 449–462 (QMVKKKAAQKKLKK).

It belongs to the Integrator subunit 12 family. Component of the Integrator complex, composed of core subunits INTS1, INTS2, INTS3, INTS4, INTS5, INTS6, INTS7, INTS8, INTS9/RC74, INTS10, INTS11/CPSF3L, INTS12, INTS13, INTS14 and INTS15. The core complex associates with protein phosphatase 2A subunits PPP2CA and PPP2R1A, to form the Integrator-PP2A (INTAC) complex. Dephosphorylated at Ser-128 by the PNUTS-PP1 complex, promoting RNA polymerase II transcription pause-release.

It localises to the nucleus. In terms of biological role, component of the integrator complex, a multiprotein complex that terminates RNA polymerase II (Pol II) transcription in the promoter-proximal region of genes. The integrator complex provides a quality checkpoint during transcription elongation by driving premature transcription termination of transcripts that are unfavorably configured for transcriptional elongation: the complex terminates transcription by (1) catalyzing dephosphorylation of the C-terminal domain (CTD) of Pol II subunit POLR2A/RPB1 and SUPT5H/SPT5, (2) degrading the exiting nascent RNA transcript via endonuclease activity and (3) promoting the release of Pol II from bound DNA. The integrator complex is also involved in terminating the synthesis of non-coding Pol II transcripts, such as enhancer RNAs (eRNAs), small nuclear RNAs (snRNAs), telomerase RNAs and long non-coding RNAs (lncRNAs). Mediates recruitment of cytoplasmic dynein to the nuclear envelope, probably as component of the integrator complex. The sequence is that of Integrator complex subunit 12 (INTS12) from Pongo abelii (Sumatran orangutan).